The chain runs to 252 residues: Eukaryotic translation initiation factor 3 subunit J (252 aa).

Disordered regions lie at residues 24–107 (VPAG…TPEE) and 209–232 (KQSK…TMKD). Residues 36-56 (EDEEDDVKDNWDDEEEEEEVK) are compositionally biased toward acidic residues. Positions 57–107 (EAEVKQEPKVSEKKKIAEKIKEKEKQQKKKQEELKKRLEAPEEHKELTPEE) are enriched in basic and acidic residues. Residues 65–130 (KVSEKKKIAE…ESDLELAKET (66 aa)) are a coiled coil.

It belongs to the eIF-3 subunit J family. In terms of assembly, component of the eukaryotic translation initiation factor 3 (eIF-3) complex, which is composed of 13 subunits: EIF3A, EIF3B, EIF3C, EIF3D, EIF3E, EIF3F, EIF3G, EIF3H, EIF3I, EIF3J, EIF3K, EIF3L and EIF3M.

Its subcellular location is the cytoplasm. In terms of biological role, component of the eukaryotic translation initiation factor 3 (eIF-3) complex, which is involved in protein synthesis of a specialized repertoire of mRNAs and, together with other initiation factors, stimulates binding of mRNA and methionyl-tRNAi to the 40S ribosome. The eIF-3 complex specifically targets and initiates translation of a subset of mRNAs involved in cell proliferation. The sequence is that of Eukaryotic translation initiation factor 3 subunit J from Gallus gallus (Chicken).